The following is a 278-amino-acid chain: Toxin coregulated pilus biosynthesis protein D (278 aa).

A helical membrane pass occupies residues 30–50 (LLVAIIFLVLSILGGGAYLYY).

It is found in the cell membrane. Involved in TCP pilus biogenesis. This chain is Toxin coregulated pilus biosynthesis protein D (tcpD), found in Vibrio cholerae serotype O1 (strain ATCC 39315 / El Tor Inaba N16961).